The following is a 255-amino-acid chain: Flagellar L-ring protein (255 aa).

The first 25 residues, 1–25 (MRRHSTRKTVARVAVVALAVGVLAG), serve as a signal peptide directing secretion. The N-palmitoyl cysteine moiety is linked to residue Cys-26. Residue Cys-26 is the site of S-diacylglycerol cysteine attachment.

Belongs to the FlgH family. As to quaternary structure, the basal body constitutes a major portion of the flagellar organelle and consists of four rings (L,P,S, and M) mounted on a central rod.

It is found in the cell outer membrane. Its subcellular location is the bacterial flagellum basal body. In terms of biological role, assembles around the rod to form the L-ring and probably protects the motor/basal body from shearing forces during rotation. The sequence is that of Flagellar L-ring protein from Rhodospirillum rubrum (strain ATCC 11170 / ATH 1.1.1 / DSM 467 / LMG 4362 / NCIMB 8255 / S1).